The primary structure comprises 822 residues: MGFSSELCSPQGHGVLQQMQEAELRLLEGMRKWMAQRVKSDREYAGLLHHMSLQDSGGQSRAISPDSPISQSWAEITSQTEGLSRLLRQHAEDLNSGPLSKLSLLIRERQQLRKTYSEQWQQLQQELTKTHSQDIEKLKSQYRALARDSAQAKRKYQEASKDKDRDKAKDKYVRSLWKLFAHHNRYVLGVRAAQLHHQHHHQLLLPGLLRSLQDLHEEMACILKEILQEYLEISSLVQDEVVAIHREMAAAAARIQPEAEYQGFLRQYGSAPDVPPCVTFDESLLEEGEPLEPGELQLNELTVESVQHTLTSVTDELAVATEMVFRRQEMVTQLQQELRNEEENTHPRERVQLLGKRQVLQEALQGLQVALCSQAKLQAQQELLQTKLEHLGPGEPPPVLLLQDDRHSTSSSEQEREGGRTPTLEILKSHISGIFRPKFSLPPPLQLIPEVQKPLHEQLWYHGAIPRAEVAELLVHSGDFLVRESQGKQEYVLSVLWDGLPRHFIIQSLDNLYRLEGEGFPSIPLLIDHLLSTQQPLTKKSGVVLHRAVPKDKWVLNHEDLVLGEQIGRGNFGEVFSGRLRADNTLVAVKSCRETLPPDLKAKFLQEARILKQYSHPNIVRLIGVCTQKQPIYIVMELVQGGDFLTFLRTEGARLRVKTLLQMVGDAAAGMEYLESKCCIHRDLAARNCLVTEKNVLKISDFGMSREEADGVYAASGGLRQVPVKWTAPEALNYGRYSSESDVWSFGILLWETFSLGASPYPNLSNQQTREFVEKGGRLPCPELCPDAVFRLMEQCWAYEPGQRPSFSTIYQELQSIRKRHR.

Residues 1 to 260 (MGFSSELCSP…AAARIQPEAE (260 aa)) enclose the F-BAR domain. The important for interaction with membranes containing phosphoinositides stretch occupies residues 1 to 300 (MGFSSELCSP…LEPGELQLNE (300 aa)). 2 positions are modified to phosphoserine: S64 and S67. The stretch at 125 to 169 (QELTKTHSQDIEKLKSQYRALARDSAQAKRKYQEASKDKDRDKAK) forms a coiled coil. Y261 is modified (phosphotyrosine). The stretch at 324-368 (VFRRQEMVTQLQQELRNEEENTHPRERVQLLGKRQVLQEALQGLQ) forms a coiled coil. The interval 394–421 (GEPPPVLLLQDDRHSTSSSEQEREGGRT) is disordered. The span at 403-419 (QDDRHSTSSSEQEREGG) shows a compositional bias: basic and acidic residues. A phosphoserine mark is found at S408 and S411. T421 is modified (phosphothreonine). In terms of domain architecture, SH2 spans 460–549 (WYHGAIPRAE…KSGVVLHRAV (90 aa)). One can recognise a Protein kinase domain in the interval 561–822 (LVLGEQIGRG…ELQSIRKRHR (262 aa)). ATP is bound by residues 567 to 575 (IGRGNFGEV) and K590. The active-site Proton acceptor is the D683. Residue Y713 is modified to Phosphotyrosine; by autocatalysis. A Phosphoserine modification is found at S716.

The protein belongs to the protein kinase superfamily. Tyr protein kinase family. Fes/fps subfamily. As to quaternary structure, homooligomer. Interacts with BCR. Interacts (when activated, via coiled coil domain) with TRIM28. Interacts (via SH2 domain) with phosphorylated EZR, MS4A2/FCER1B and HCLS1/HS1. Interacts with phosphorylated KIT. Interacts with FLT3. Interacts (via F-BAR domain) with soluble tubulin. Interacts (via SH2 domain) with microtubules. Post-translationally, autophosphorylated on Tyr-713. Phosphorylated by LYN in response to FCER1 activation. Phosphorylated by HCK. In terms of tissue distribution, widely expressed. Detected in adult colon epithelium (at protein level). Expressed in melanocytes (at protein level).

It localises to the cytoplasm. The protein resides in the cytosol. It is found in the cytoskeleton. The protein localises to the cell membrane. Its subcellular location is the cytoplasmic vesicle. It localises to the golgi apparatus. The protein resides in the cell junction. It is found in the focal adhesion. The catalysed reaction is L-tyrosyl-[protein] + ATP = O-phospho-L-tyrosyl-[protein] + ADP + H(+). Kinase activity is tightly regulated. Activated in response to signaling from a cell surface receptor. Activation probably requires binding of a substrate via the SH2 domain, plus autophosphorylation at Tyr-713. Present in an inactive form in the absence of activating stimuli. Its function is as follows. Tyrosine-protein kinase that acts downstream of cell surface receptors and plays a role in the regulation of the actin cytoskeleton, microtubule assembly, cell attachment and cell spreading. Plays a role in FCER1 (high affinity immunoglobulin epsilon receptor)-mediated signaling in mast cells. Acts down-stream of the activated FCER1 receptor and the mast/stem cell growth factor receptor KIT. Plays a role in the regulation of mast cell degranulation. Plays a role in the regulation of cell differentiation and promotes neurite outgrowth in response to NGF signaling. Plays a role in cell scattering and cell migration in response to HGF-induced activation of EZR. Phosphorylates BCR and down-regulates BCR kinase activity. Phosphorylates HCLS1/HS1, PECAM1, STAT3 and TRIM28. The sequence is that of Tyrosine-protein kinase Fes/Fps (FES) from Homo sapiens (Human).